Here is a 316-residue protein sequence, read N- to C-terminus: 4-hydroxy-3-methylbut-2-enyl diphosphate reductase (316 aa).

Cys-12 provides a ligand contact to [4Fe-4S] cluster. His-41 and His-74 together coordinate (2E)-4-hydroxy-3-methylbut-2-enyl diphosphate. 2 residues coordinate dimethylallyl diphosphate: His-41 and His-74. 2 residues coordinate isopentenyl diphosphate: His-41 and His-74. [4Fe-4S] cluster is bound at residue Cys-96. His-124 serves as a coordination point for (2E)-4-hydroxy-3-methylbut-2-enyl diphosphate. Residue His-124 participates in dimethylallyl diphosphate binding. Position 124 (His-124) interacts with isopentenyl diphosphate. Glu-126 serves as the catalytic Proton donor. Thr-167 is a binding site for (2E)-4-hydroxy-3-methylbut-2-enyl diphosphate. Cys-197 lines the [4Fe-4S] cluster pocket. (2E)-4-hydroxy-3-methylbut-2-enyl diphosphate is bound by residues Ser-225, Ser-226, Asn-227, and Ser-269. Dimethylallyl diphosphate-binding residues include Ser-225, Ser-226, Asn-227, and Ser-269. Residues Ser-225, Ser-226, Asn-227, and Ser-269 each coordinate isopentenyl diphosphate.

The protein belongs to the IspH family. As to quaternary structure, homodimer. [4Fe-4S] cluster serves as cofactor.

It carries out the reaction isopentenyl diphosphate + 2 oxidized [2Fe-2S]-[ferredoxin] + H2O = (2E)-4-hydroxy-3-methylbut-2-enyl diphosphate + 2 reduced [2Fe-2S]-[ferredoxin] + 2 H(+). The enzyme catalyses dimethylallyl diphosphate + 2 oxidized [2Fe-2S]-[ferredoxin] + H2O = (2E)-4-hydroxy-3-methylbut-2-enyl diphosphate + 2 reduced [2Fe-2S]-[ferredoxin] + 2 H(+). The protein operates within isoprenoid biosynthesis; dimethylallyl diphosphate biosynthesis; dimethylallyl diphosphate from (2E)-4-hydroxy-3-methylbutenyl diphosphate: step 1/1. It participates in isoprenoid biosynthesis; isopentenyl diphosphate biosynthesis via DXP pathway; isopentenyl diphosphate from 1-deoxy-D-xylulose 5-phosphate: step 6/6. Its function is as follows. Catalyzes the conversion of 1-hydroxy-2-methyl-2-(E)-butenyl 4-diphosphate (HMBPP) into a mixture of isopentenyl diphosphate (IPP) and dimethylallyl diphosphate (DMAPP). Acts in the terminal step of the DOXP/MEP pathway for isoprenoid precursor biosynthesis. This chain is 4-hydroxy-3-methylbut-2-enyl diphosphate reductase, found in Pectobacterium atrosepticum (strain SCRI 1043 / ATCC BAA-672) (Erwinia carotovora subsp. atroseptica).